Here is a 202-residue protein sequence, read N- to C-terminus: MLKLTPRQAEILAFIKRCLEDNGYPPTRAEIAQELGFKSPNAAEEHLKALARKGAIEMTPGASRGIRIPGFEAKPDDSSLPIIGRVAAGAPILAEQHIEESCNINPAFFHPRADYLLRVHGMSMKDIGIFDGDLLAVHTTREARNGQVVVARIGDEVTVKRFKREGSKVWLIAENPEFAPIEVNLKDQDLVIEGLSVGVIRR.

Positions 28–48 form a DNA-binding region, H-T-H motif; the sequence is RAEIAQELGFKSPNAAEEHLK. Catalysis depends on for autocatalytic cleavage activity residues Ser123 and Lys160.

Belongs to the peptidase S24 family. Homodimer.

The catalysed reaction is Hydrolysis of Ala-|-Gly bond in repressor LexA.. Its function is as follows. Represses a number of genes involved in the response to DNA damage (SOS response), including recA and lexA. In the presence of single-stranded DNA, RecA interacts with LexA causing an autocatalytic cleavage which disrupts the DNA-binding part of LexA, leading to derepression of the SOS regulon and eventually DNA repair. This chain is LexA repressor, found in Pseudomonas chlororaphis (Pseudomonas aureofaciens).